The following is a 312-amino-acid chain: Pyrimidine-specific ribonucleoside hydrolase RihA (312 aa).

The active site involves His240.

Belongs to the IUNH family. RihA subfamily.

Its function is as follows. Hydrolyzes cytidine or uridine to ribose and cytosine or uracil, respectively. This is Pyrimidine-specific ribonucleoside hydrolase RihA from Shewanella woodyi (strain ATCC 51908 / MS32).